Consider the following 911-residue polypeptide: Disks large homolog 1 (911 aa).

The L27 domain maps to 4-64 (RKQDTQRALH…FYEVTLLDNP (61 aa)). A Phosphoserine; by CaMK2 modification is found at S39. The tract at residues 70 to 105 (SKQCEPVQPGNPWESGSLSSAAVTSESLPGGLSPPV) is disordered. Residues 83–96 (ESGSLSSAAVTSES) show a composition bias toward polar residues. A phosphoserine mark is found at S122, S138, and S158. Positions 162–212 (PTEAVPPSSPIVPVTPALPVPAESPVVLPSTPQANPPPVLVNTDSLETPTY) are interaction with SH3 domains. 2 consecutive PDZ domains span residues 224–310 (EITL…VKRR) and 318–404 (EIKL…AAKP). The segment at 224-545 (EITLERGNSG…QAVTIVAQYR (322 aa)) is required for interaction with MARCHF2. S232 carries the post-translational modification Phosphoserine; by CaMK2. Y398 bears the Phosphotyrosine mark. Positions 419-441 (TNSSSQSVDNHVSPSSYLGQTPA) are enriched in polar residues. Residues 419–443 (TNSSSQSVDNHVSPSSYLGQTPASP) form a disordered region. The PDZ 3 domain occupies 465–545 (KVVLHRGSTG…QAVTIVAQYR (81 aa)). 9 positions are modified to phosphoserine: S567, S572, S574, S578, S597, S618, S684, S687, and S841. One can recognise an SH3 domain in the interval 580–650 (KRSLYVRALF…PSKRRVEKKE (71 aa)). The disordered stretch occupies residues 662–696 (KTRGDKGEIPDDMGSKGLKHVTSNASDSESSYHEY). The 176-residue stretch at 721 to 896 (TRPVIILGPM…IYNQVKQIIE (176 aa)) folds into the Guanylate kinase-like domain.

The protein belongs to the MAGUK family. As to quaternary structure, homotetramer. Interacts (via guanylate kinase-like domain) with DLGAP1, DLGAP2, DLGAP3, DLGAP4 and MAP1A. Interacts (via guanylate kinase-like domain) with KIF13B. May interact with HTR2A. Interacts (via PDZ domains) with GRIA1. Interacts (via PDZ domains) with GRIN2A. Interacts (via PDZ domains) with KCND2 and KCND3. Interacts (via PDZ domains) with KCNA1, KCNA2, KCNA3 and KCNA4. Interacts (via PDZ domains) with ADGRA3. Interacts with KCNF1. Interacts with CAMK2. Interacts with cytoskeleton-associated protein EPB41. Interacts with cytoskeleton-associated protein EZR. Found in a complex with KCNA5 and CAV3. Found in a complex with APC and CTNNB1. Interacts (via PDZ domains) with APC. Interacts with CDH1 through binding to PIK3R1. Forms multiprotein complexes with CASK, LIN7A, LIN7B, LIN7C, APBA1, and KCNJ12. Interacts with TOPK. Forms a tripartite complex composed of DLG1, MPP7 and LIN7 (LIN7A or LIN7C). May interact with TJAP1. Interacts with PTEN. Interacts with FRMPD4 (via C-terminus). Interacts with LRFN1 and LRFN2. Interacts with LRFN4 and SFPQ. Interacts (via PDZ domains) with ADGRA2 (via PDZ-binding motif). Interacts with ADAM10; this interaction recruits ADAM10 to the cell membrane during long-term depression in hippocampal neurons. Interacts with DGKI (via PDZ-binding motif). Interacts (via PDZ domains) with MARCHF2 (via PDZ domain); the interaction leads to DLG1 ubiqtuitination and degradation. Interacts (via N-terminus) with MPP3; this interaction connects CADM1 with DLG1 and links CADM1 with the regulatory subunit of phosphoinositide-3-kinase (PI3K) by forming a multiprotein complex and participates in cell spreading. Phosphorylated by MAPK12. Phosphorylation of Ser-39 modulates transport to the plasma membrane. Phosphorylation of Ser-232 regulates association with GRIN2A. Post-translationally, ubiquitinated; by MARCHF2 which results in its degradation. In terms of tissue distribution, widely expressed. Strongly expressed in epithelial cells, in the small intestine it is only detected in the vili. Expressed in brain, heart (at protein level), muscle, lung and liver. In the brain it was detected in olfactory bulbs, cerebral cortex, hippocampus, and spinal cord (at protein level).

Its subcellular location is the cell membrane. The protein localises to the basolateral cell membrane. It is found in the endoplasmic reticulum membrane. The protein resides in the postsynaptic density. It localises to the synapse. Its subcellular location is the sarcolemma. The protein localises to the cell junction. It is found in the cytoplasm. The protein resides in the apical cell membrane. In terms of biological role, essential multidomain scaffolding protein required for normal development. Recruits channels, receptors and signaling molecules to discrete plasma membrane domains in polarized cells. Promotes epithelial cell layer barrier function via maintaining cell-cell adhesion. May play a role in adherens junction assembly, signal transduction, cell proliferation, synaptogenesis and lymphocyte activation. Regulates the excitability of cardiac myocytes by modulating the functional expression of Kv4 channels. Functional regulator of Kv1.5 channel. During long-term depression in hippocampal neurons, it recruits ADAM10 to the plasma membrane. The polypeptide is Disks large homolog 1 (Rattus norvegicus (Rat)).